Consider the following 360-residue polypeptide: tRNA (guanine(9)-N1)-methyltransferase (360 aa).

A disordered region spans residues 1-77; sequence MENQDTEQSQ…RRKERIKEAE (77 aa). Composition is skewed to basic and acidic residues over residues 8-24 and 33-55; these read QSQK…DFKR and MTKR…DEYK. Basic residues predominate over residues 56–67; it reads QKKREKKKAARE. Residues 68 to 77 are compositionally biased toward basic and acidic residues; it reads RRKERIKEAE. The SAM-dependent MTase TRM10-type domain occupies 94–293; it reads RAKVAPQEQI…EVLPPRKVKG (200 aa). S-adenosyl-L-methionine is bound by residues 199–200, Gly-219, 223–227, Cys-231, Leu-245, and 257–259; these read LT, DKNRY, and QVL. Catalysis depends on Asp-223, which acts as the Proton acceptor. The tract at residues 291–360 is disordered; it reads VKGKLTHGSD…SDEPSKGADH (70 aa). The span at 297–306 shows a compositional bias: basic and acidic residues; the sequence is HGSDPEKSIE. Residues 307-324 show a composition bias toward low complexity; sequence PSEVSEQPVSSEQSEQPV. Polar residues predominate over residues 328–343; it reads QPVSSEQPVLSEQPVL.

This sequence belongs to the class IV-like SAM-binding methyltransferase superfamily. TRM10 family. As to quaternary structure, monomer.

Its subcellular location is the cytoplasm. It localises to the nucleus. It catalyses the reaction guanosine(9) in tRNA + S-adenosyl-L-methionine = N(1)-methylguanosine(9) in tRNA + S-adenosyl-L-homocysteine + H(+). S-adenosyl-L-methionine-dependent guanine N(1)-methyltransferase that catalyzes the formation of N(1)-methylguanine at position 9 (m1G9) in cytoplasmic tRNA. This Debaryomyces hansenii (strain ATCC 36239 / CBS 767 / BCRC 21394 / JCM 1990 / NBRC 0083 / IGC 2968) (Yeast) protein is tRNA (guanine(9)-N1)-methyltransferase.